We begin with the raw amino-acid sequence, 120 residues long: Flagellar protein FliT (120 aa).

The required for homodimerization stretch occupies residues methionine 1 to threonine 50. Residues isoleucine 59–lysine 97 are fliD binding.

This sequence belongs to the FliT family. Homodimer. Interacts with FliD and FlhC.

It is found in the cytoplasm. The protein resides in the cytosol. Functionally, dual-function protein that regulates the transcription of class 2 flagellar operons and that also acts as an export chaperone for the filament-capping protein FliD. As a transcriptional regulator, acts as an anti-FlhDC factor; it directly binds FlhC, thus inhibiting the binding of the FlhC/FlhD complex to class 2 promoters, resulting in decreased expression of class 2 flagellar operons. As a chaperone, effects FliD transition to the membrane by preventing its premature polymerization, and by directing it to the export apparatus. In Enterobacter sp. (strain 638), this protein is Flagellar protein FliT.